The following is a 505-amino-acid chain: ATP synthase subunit alpha (505 aa).

170–177 (GDRQTGKT) serves as a coordination point for ATP.

The protein belongs to the ATPase alpha/beta chains family. F-type ATPases have 2 components, CF(1) - the catalytic core - and CF(0) - the membrane proton channel. CF(1) has five subunits: alpha(3), beta(3), gamma(1), delta(1), epsilon(1). CF(0) has four main subunits: a, b, b' and c.

It localises to the cellular thylakoid membrane. The enzyme catalyses ATP + H2O + 4 H(+)(in) = ADP + phosphate + 5 H(+)(out). Functionally, produces ATP from ADP in the presence of a proton gradient across the membrane. The alpha chain is a regulatory subunit. This Cyanothece sp. (strain PCC 7425 / ATCC 29141) protein is ATP synthase subunit alpha.